Consider the following 299-residue polypeptide: Single myb histone 1 (299 aa).

Residues 1-61 (MGAPKQRWTP…KWRNLSVTAG (61 aa)) form the HTH myb-type domain. A DNA-binding region (H-T-H motif) is located at residues 28 to 57 (WRTILRDSDFSALLRLRSNVDLKDKWRNLS). The H15 domain occupies 124–192 (SVARLDDLIL…KVNQKYRIAP (69 aa)). The stretch at 238-279 (EEAAAFAAKAVAEAEVAIAEAEEAARVAEAAENDAEAAKAFL) forms a coiled coil.

Belongs to the histone H1/H5 family. SMH subfamily. As to quaternary structure, forms a homodimer and heterodimers. In terms of tissue distribution, expressed in leaves.

It localises to the nucleus. It is found in the chromosome. Its subcellular location is the nucleolus. The protein resides in the telomere. Binds preferentially double-stranded telomeric repeats 5'-TTTAGGG-3', but can also bind to the single G-rich and C-rich telomeric strand. This Zea mays (Maize) protein is Single myb histone 1 (SMH1).